The sequence spans 160 residues: UPF0262 protein BCAN_A0255 (160 aa).

This sequence belongs to the UPF0262 family.

The protein is UPF0262 protein BCAN_A0255 of Brucella canis (strain ATCC 23365 / NCTC 10854 / RM-666).